A 1156-amino-acid polypeptide reads, in one-letter code: Reverse gyrase 1 (1156 aa).

An RG N-terminal-type zinc finger spans residues methionine 1–asparagine 38. Residues cysteine 10, cysteine 13, cysteine 28, and cysteine 31 each contribute to the Zn(2+) site. Residues glutamine 86 and alanine 103–threonine 110 each bind ATP. A Helicase ATP-binding domain is found at isoleucine 90–proline 277. Positions aspartate 184 to aspartate 187 match the DEAD box motif. The topoisomerase I stretch occupies residues isoleucine 570–valine 1156. One can recognise a Toprim domain in the interval threonine 574–isoleucine 736. Residue glutamate 580 coordinates Mg(2+). The RG C-terminal-type zinc-finger motif lies at isoleucine 655–serine 682. Zn(2+) contacts are provided by cysteine 658, cysteine 661, cysteine 672, and cysteine 675. Mg(2+) is bound at residue aspartate 705. One can recognise a Topo IA-type catalytic domain in the interval asparagine 752–serine 1143. Catalysis depends on tyrosine 895, which acts as the O-(5'-phospho-DNA)-tyrosine intermediate.

In the N-terminal section; belongs to the DEAD box helicase family. DDVD subfamily. This sequence in the C-terminal section; belongs to the type IA topoisomerase family. As to quaternary structure, monomer. Zn(2+) serves as cofactor. The cofactor is Mg(2+).

The protein localises to the cytoplasm. It carries out the reaction ATP + H2O = ADP + phosphate + H(+). Modifies the topological state of DNA by introducing positive supercoils in an ATP-dependent process, increasing the linking number in steps of +1. Binds to single-stranded DNA, transiently cleaves and then rejoins the ends, introducing a positive supercoil in the process. The scissile phosphodiester is attacked by the catalytic tyrosine of the enzyme, resulting in the formation of a DNA-(5'-phosphotyrosyl)-enzyme intermediate. Probably involved in rewinding DNA strands in regions of the chromosome that have opened up to allow replication, transcription, DNA repair and/or for DNA protection. This is Reverse gyrase 1 from Sulfurisphaera tokodaii (strain DSM 16993 / JCM 10545 / NBRC 100140 / 7) (Sulfolobus tokodaii).